Reading from the N-terminus, the 157-residue chain is MSSEKRVGMVEKSNNKRQRVNQVPVFSINDHHDVLVEILRRLDGSSLCSAACVCRLWSAVARNDSIWEELCFRQVSPRPSLSLRSVVSALGGYRCLYFLCIRPVLARLPKLLWTRDQLQLSLSLYCVHYYERLYVGAWLGDAPPSSLIFLRKPVNVV.

The F-box domain maps to 24-70 (PVFSINDHHDVLVEILRRLDGSSLCSAACVCRLWSAVARNDSIWEEL).

Part of a SCF (ASK-cullin-F-box) protein ligase complex. Interacts directly with SKP1A and SKP1B. Highly expressed in flowers and at much lower level in seedlings, rosette leaves and green siliques.

Its subcellular location is the nucleus. The protein operates within protein modification; protein ubiquitination. In terms of biological role, essential component of a SCF-type E3 ligase complex that positively regulates the gibberellin signaling pathway. Upon gibberellin treatment, such complex probably mediates the ubiquitination and subsequent degradation of DELLA proteins (GAI, RGA and RGL2), some repressors of the gibberellin pathway, leading to activate the pathway. Can partially complement the absence of GID2/SLY1. This is F-box protein SNE (SNE) from Arabidopsis thaliana (Mouse-ear cress).